The sequence spans 546 residues: Probable sucrose-6-phosphate hydrolase (546 aa).

Substrate-binding positions include 105 to 108, glutamine 124, 167 to 168, 228 to 229, and glutamate 283; these read LLND, FS, and RD. Residue aspartate 108 is part of the active site.

This sequence belongs to the glycosyl hydrolase 32 family.

The protein localises to the cytoplasm. It catalyses the reaction Hydrolysis of terminal non-reducing beta-D-fructofuranoside residues in beta-D-fructofuranosides.. Its pathway is glycan biosynthesis; sucrose metabolism. Its function is as follows. Enables the bacterium to metabolize sucrose as a sole carbon source. This Vibrio cholerae serotype O1 (strain ATCC 39541 / Classical Ogawa 395 / O395) protein is Probable sucrose-6-phosphate hydrolase (cscA).